The following is an 87-amino-acid chain: Small ribosomal subunit protein bS20 (87 aa).

A disordered region spans residues 1–26; it reads MANIKSAKKRAVQSEKARKHNASRRS.

It belongs to the bacterial ribosomal protein bS20 family.

Functionally, binds directly to 16S ribosomal RNA. This Salmonella typhi protein is Small ribosomal subunit protein bS20.